Consider the following 434-residue polypeptide: ATP-dependent protease ATPase subunit HslU (434 aa).

Residues Val-18, 60 to 65 (GVGKTE), Asp-247, Glu-312, and Arg-384 contribute to the ATP site.

The protein belongs to the ClpX chaperone family. HslU subfamily. A double ring-shaped homohexamer of HslV is capped on each side by a ring-shaped HslU homohexamer. The assembly of the HslU/HslV complex is dependent on binding of ATP.

It localises to the cytoplasm. ATPase subunit of a proteasome-like degradation complex; this subunit has chaperone activity. The binding of ATP and its subsequent hydrolysis by HslU are essential for unfolding of protein substrates subsequently hydrolyzed by HslV. HslU recognizes the N-terminal part of its protein substrates and unfolds these before they are guided to HslV for hydrolysis. This Phenylobacterium zucineum (strain HLK1) protein is ATP-dependent protease ATPase subunit HslU.